The chain runs to 166 residues: Phosphopantetheine adenylyltransferase (166 aa).

Position 9 (Thr-9) interacts with substrate. ATP is bound by residues 9 to 10 (TF) and His-17. Positions 41, 73, and 87 each coordinate substrate. ATP is bound by residues 88–90 (GLR), Glu-98, and 123–129 (YQFISGT).

It belongs to the bacterial CoaD family. Homohexamer. Mg(2+) is required as a cofactor.

Its subcellular location is the cytoplasm. It carries out the reaction (R)-4'-phosphopantetheine + ATP + H(+) = 3'-dephospho-CoA + diphosphate. It participates in cofactor biosynthesis; coenzyme A biosynthesis; CoA from (R)-pantothenate: step 4/5. Its function is as follows. Reversibly transfers an adenylyl group from ATP to 4'-phosphopantetheine, yielding dephospho-CoA (dPCoA) and pyrophosphate. In Burkholderia mallei (strain NCTC 10229), this protein is Phosphopantetheine adenylyltransferase.